A 159-amino-acid polypeptide reads, in one-letter code: uncharacterized protein (159 aa).

It localises to the mitochondrion. This is an uncharacterized protein from Arabidopsis thaliana (Mouse-ear cress).